Reading from the N-terminus, the 361-residue chain is Membrane-bound lytic murein transglycosylase B (361 aa).

The signal sequence occupies residues Met-1–Ala-18. A lipid anchor (N-palmitoyl cysteine) is attached at Cys-19. Cys-19 carries the S-diacylglycerol cysteine lipid modification. Glu-162 is an active-site residue.

In terms of assembly, monomer.

Its subcellular location is the cell outer membrane. The catalysed reaction is Exolytic cleavage of the (1-&gt;4)-beta-glycosidic linkage between N-acetylmuramic acid (MurNAc) and N-acetylglucosamine (GlcNAc) residues in peptidoglycan, from either the reducing or the non-reducing ends of the peptidoglycan chains, with concomitant formation of a 1,6-anhydrobond in the MurNAc residue.. Its function is as follows. Murein-degrading enzyme. Catalyzes the cleavage of the glycosidic bonds between N-acetylmuramic acid and N-acetylglucosamine residues in peptidoglycan. May play a role in recycling of muropeptides during cell elongation and/or cell division. The polypeptide is Membrane-bound lytic murein transglycosylase B (mltB) (Escherichia coli (strain K12)).